A 457-amino-acid chain; its full sequence is Ribosomal protein uS12 methylthiotransferase RimO (457 aa).

An MTTase N-terminal domain is found at 6–116 (PKVGFVSLGC…VMEAVHAALP (111 aa)). The [4Fe-4S] cluster site is built by cysteine 15, cysteine 51, cysteine 80, cysteine 147, cysteine 151, and cysteine 154. Positions 133–370 (LTPRHYAYLK…MARQAEISAA (238 aa)) constitute a Radical SAM core domain. Positions 373 to 441 (EAKIGSVQQC…EHDLFGDALP (69 aa)) constitute a TRAM domain.

This sequence belongs to the methylthiotransferase family. RimO subfamily. The cofactor is [4Fe-4S] cluster.

It is found in the cytoplasm. It catalyses the reaction L-aspartate(89)-[ribosomal protein uS12]-hydrogen + (sulfur carrier)-SH + AH2 + 2 S-adenosyl-L-methionine = 3-methylsulfanyl-L-aspartate(89)-[ribosomal protein uS12]-hydrogen + (sulfur carrier)-H + 5'-deoxyadenosine + L-methionine + A + S-adenosyl-L-homocysteine + 2 H(+). Catalyzes the methylthiolation of an aspartic acid residue of ribosomal protein uS12. This chain is Ribosomal protein uS12 methylthiotransferase RimO, found in Xanthomonas campestris pv. campestris (strain 8004).